The following is a 206-amino-acid chain: Ribosomal RNA large subunit methyltransferase E (206 aa).

S-adenosyl-L-methionine contacts are provided by Gly60, Trp62, Asp80, Asp96, and Asp121. Catalysis depends on Lys161, which acts as the Proton acceptor.

The protein belongs to the class I-like SAM-binding methyltransferase superfamily. RNA methyltransferase RlmE family.

Its subcellular location is the cytoplasm. It catalyses the reaction uridine(2552) in 23S rRNA + S-adenosyl-L-methionine = 2'-O-methyluridine(2552) in 23S rRNA + S-adenosyl-L-homocysteine + H(+). Functionally, specifically methylates the uridine in position 2552 of 23S rRNA at the 2'-O position of the ribose in the fully assembled 50S ribosomal subunit. In Nitrosomonas europaea (strain ATCC 19718 / CIP 103999 / KCTC 2705 / NBRC 14298), this protein is Ribosomal RNA large subunit methyltransferase E.